Here is a 157-residue protein sequence, read N- to C-terminus: Protein E6 (157 aa).

2 zinc fingers span residues 39 to 75 and 112 to 148; these read CNFC…CRSC and CQTC…CRQC.

This sequence belongs to the papillomaviridae E6 protein family. As to quaternary structure, forms homodimers. Interacts with ubiquitin-protein ligase UBE3A/E6-AP; this interaction stimulates UBE3A ubiquitin activity. Interacts with host BAK1.

It is found in the host cytoplasm. The protein resides in the host nucleus. Functionally, plays a major role in the induction and maintenance of cellular transformation. E6 associates with host UBE3A/E6-AP ubiquitin-protein ligase and modulates its activity. Protects host keratinocytes from apoptosis by mediating the degradation of host BAK1. May also inhibit host immune response. This is Protein E6 from Homo sapiens (Human).